The sequence spans 245 residues: 1-(5-phosphoribosyl)-5-[(5-phosphoribosylamino)methylideneamino] imidazole-4-carboxamide isomerase (245 aa).

Asp-7 functions as the Proton acceptor in the catalytic mechanism. Asp-129 serves as the catalytic Proton donor.

This sequence belongs to the HisA/HisF family.

The protein localises to the cytoplasm. It catalyses the reaction 1-(5-phospho-beta-D-ribosyl)-5-[(5-phospho-beta-D-ribosylamino)methylideneamino]imidazole-4-carboxamide = 5-[(5-phospho-1-deoxy-D-ribulos-1-ylimino)methylamino]-1-(5-phospho-beta-D-ribosyl)imidazole-4-carboxamide. The protein operates within amino-acid biosynthesis; L-histidine biosynthesis; L-histidine from 5-phospho-alpha-D-ribose 1-diphosphate: step 4/9. The polypeptide is 1-(5-phosphoribosyl)-5-[(5-phosphoribosylamino)methylideneamino] imidazole-4-carboxamide isomerase (Cronobacter sakazakii (strain ATCC BAA-894) (Enterobacter sakazakii)).